Reading from the N-terminus, the 326-residue chain is MEMO1 family protein TTHA0924 (326 aa).

This sequence belongs to the MEMO1 family.

This Thermus thermophilus (strain ATCC 27634 / DSM 579 / HB8) protein is MEMO1 family protein TTHA0924.